A 250-amino-acid chain; its full sequence is Glycerol-1-phosphate phosphohydrolase 2 (250 aa).

The active-site Nucleophile is the D18. The Mg(2+) site is built by D18 and D20. D20 functions as the Proton donor in the catalytic mechanism. Residue K64 forms a Glycyl lysine isopeptide (Lys-Gly) (interchain with G-Cter in ubiquitin) linkage. S90 carries the post-translational modification Phosphoserine. A Glycyl lysine isopeptide (Lys-Gly) (interchain with G-Cter in ubiquitin) cross-link involves residue K144. D179 provides a ligand contact to Mg(2+).

It belongs to the HAD-like hydrolase superfamily. DOG/GPP family. Monomer. It depends on Mg(2+) as a cofactor.

It localises to the cytoplasm. It is found in the nucleus. The enzyme catalyses sn-glycerol 1-phosphate + H2O = glycerol + phosphate. The catalysed reaction is sn-glycerol 3-phosphate + H2O = glycerol + phosphate. In terms of biological role, glycerol-1-phosphate phosphohydrolase involved in glycerol biosynthesis. Plays a role in osmoadaptation. The chain is Glycerol-1-phosphate phosphohydrolase 2 from Saccharomyces cerevisiae (strain ATCC 204508 / S288c) (Baker's yeast).